Here is a 233-residue protein sequence, read N- to C-terminus: Ion-translocating oxidoreductase complex subunit E (233 aa).

6 helical membrane passes run 18–38 (ALVQ…ATNA), 39–59 (LGLG…VSAL), 69–89 (IPIY…LINA), 92–112 (FGLY…CIVI), 128–148 (ALDG…LGAL), and 182–202 (PFLL…LLAG).

Belongs to the NqrDE/RnfAE family. As to quaternary structure, the complex is composed of six subunits: RnfA, RnfB, RnfC, RnfD, RnfE and RnfG.

The protein resides in the cell inner membrane. Its function is as follows. Part of a membrane-bound complex that couples electron transfer with translocation of ions across the membrane. The chain is Ion-translocating oxidoreductase complex subunit E from Yersinia pseudotuberculosis serotype O:1b (strain IP 31758).